A 704-amino-acid polypeptide reads, in one-letter code: Elongation factor G (704 aa).

Residues 8–290 form the tr-type G domain; it reads ARYRNIGISA…AVIDYLPSPV (283 aa). GTP contacts are provided by residues 17 to 24, 88 to 92, and 142 to 145; these read AHIDAGKT, DTPGH, and NKMD.

The protein belongs to the TRAFAC class translation factor GTPase superfamily. Classic translation factor GTPase family. EF-G/EF-2 subfamily.

It is found in the cytoplasm. In terms of biological role, catalyzes the GTP-dependent ribosomal translocation step during translation elongation. During this step, the ribosome changes from the pre-translocational (PRE) to the post-translocational (POST) state as the newly formed A-site-bound peptidyl-tRNA and P-site-bound deacylated tRNA move to the P and E sites, respectively. Catalyzes the coordinated movement of the two tRNA molecules, the mRNA and conformational changes in the ribosome. The protein is Elongation factor G of Salmonella arizonae (strain ATCC BAA-731 / CDC346-86 / RSK2980).